A 299-amino-acid chain; its full sequence is Caspase-1 (299 aa).

A propeptide spanning residues 1-28 (MLDGKQDNGNVDSVDIKQRTNGGGDEGD) is cleaved from the precursor. The interval 1–45 (MLDGKQDNGNVDSVDIKQRTNGGGDEGDALGSNSSSQPNRVARMP) is disordered. Residues His-136 and Cys-178 contribute to the active site. The propeptide occupies 185-195 (GGITLSRTETD).

It belongs to the peptidase C14A family. In terms of assembly, heterotetramer that consists of two anti-parallel arranged heterodimers, each one formed by a 19/18 kDa (p19/18) and a 12 kDa (p12) subunit. In terms of processing, the two subunits are derived from the precursor sequence by an autocatalytic mechanism.

Functionally, involved in the activation cascade of caspases responsible for apoptosis execution. Inhibited by the baculovirus anti-apoptotic protein p35. Cleaves p35 and nuclear immunophilin FKBP46. The sequence is that of Caspase-1 from Spodoptera frugiperda (Fall armyworm).